The primary structure comprises 408 residues: Zinc chaperone AztD (408 aa).

Positions 1 to 21 are cleaved as a signal peptide; sequence MLRHLAGASALALTLAGAGFA. The N-terminal Zn(2+)-binding motif; binds a third Zn(2+) with low affinity signature appears at 23 to 29; sequence DHDHDHE. Zn(2+) is bound by residues H99, H102, D104, H124, H167, H218, and H408. The cysteines at positions 214 and 231 are disulfide-linked.

Monomer.

Its subcellular location is the periplasm. Its function is as follows. Acts as a zinc chaperone in the AztABCD zinc transport system. Directly transfers one zinc cation to the solute binding protein AztC; the transfer occurs without the formation of a stable interaction. Binds 3 Zn(2+), two with high affinity and one with low affinity, and transfers only Zn(2+) bound to site 2 to AztC. Likely functions to store zinc in the periplasm and may be important for zinc accumulation in zinc-limited environments. The sequence is that of Zinc chaperone AztD from Paracoccus denitrificans (strain Pd 1222).